The following is a 66-amino-acid chain: Small vasohibin-binding protein (66 aa).

Over residues 1-23 (MDPPARKEKPKVKEPVSRIEKAK) the composition is skewed to basic and acidic residues. The disordered stretch occupies residues 1–32 (MDPPARKEKPKVKEPVSRIEKAKQKSAQQELK). Residues 5–52 (ARKEKPKVKEPVSRIEKAKQKSAQQELKQRQRAEIYALNRVMTELEQQ) are a coiled coil.

This sequence belongs to the SVBP family. Interacts with VASH1 and VASH2.

It is found in the cytoplasm. The protein resides in the secreted. Its subcellular location is the cytoskeleton. Functionally, enhances the tyrosine carboxypeptidase activity of VASH1 and VASH2, thereby promoting the removal of the C-terminal tyrosine residue of alpha-tubulin. Also required to enhance the solubility and secretion of VASH1 and VASH2. Plays a role in axon and excitatory synapse formation. This is Small vasohibin-binding protein from Bos taurus (Bovine).